A 225-amino-acid polypeptide reads, in one-letter code: tRNA (guanine-N(1)-)-methyltransferase (225 aa).

Residues glycine 112 and 132-137 contribute to the S-adenosyl-L-methionine site; that span reads IGDYVL.

The protein belongs to the RNA methyltransferase TrmD family. In terms of assembly, homodimer.

The protein resides in the cytoplasm. The catalysed reaction is guanosine(37) in tRNA + S-adenosyl-L-methionine = N(1)-methylguanosine(37) in tRNA + S-adenosyl-L-homocysteine + H(+). Functionally, specifically methylates guanosine-37 in various tRNAs. This chain is tRNA (guanine-N(1)-)-methyltransferase, found in Porphyromonas gingivalis (strain ATCC 33277 / DSM 20709 / CIP 103683 / JCM 12257 / NCTC 11834 / 2561).